Consider the following 150-residue polypeptide: uncharacterized protein (150 aa).

Positions 3–145 (VAILSGSVYG…DAEPWLAEFA (143 aa)) constitute a Flavodoxin-like domain.

Belongs to the flavodoxin family. MioC subfamily. The cofactor is FMN.

Functionally, probable electron transporter. This is an uncharacterized protein from Pseudomonas aeruginosa (strain ATCC 15692 / DSM 22644 / CIP 104116 / JCM 14847 / LMG 12228 / 1C / PRS 101 / PAO1).